Here is a 224-residue protein sequence, read N- to C-terminus: Peptidyl-tRNA hydrolase (224 aa).

Tyrosine 27 contributes to the tRNA binding site. Histidine 32 acts as the Proton acceptor in catalysis. The tRNA site is built by tyrosine 78, asparagine 80, and asparagine 126. Residues 203–215 show a composition bias toward low complexity; that stretch reads LSGPSSDLDGSNP. The interval 203 to 224 is disordered; sequence LSGPSSDLDGSNPAPGHGEASS.

It belongs to the PTH family. In terms of assembly, monomer.

Its subcellular location is the cytoplasm. The enzyme catalyses an N-acyl-L-alpha-aminoacyl-tRNA + H2O = an N-acyl-L-amino acid + a tRNA + H(+). In terms of biological role, hydrolyzes ribosome-free peptidyl-tRNAs (with 1 or more amino acids incorporated), which drop off the ribosome during protein synthesis, or as a result of ribosome stalling. Catalyzes the release of premature peptidyl moieties from peptidyl-tRNA molecules trapped in stalled 50S ribosomal subunits, and thus maintains levels of free tRNAs and 50S ribosomes. This chain is Peptidyl-tRNA hydrolase, found in Synechococcus sp. (strain JA-2-3B'a(2-13)) (Cyanobacteria bacterium Yellowstone B-Prime).